Consider the following 450-residue polypeptide: UDP-N-acetylmuramoylalanine--D-glutamate ligase (450 aa).

Position 116–122 (116–122 (GSNGKTT)) interacts with ATP.

Belongs to the MurCDEF family.

It localises to the cytoplasm. The catalysed reaction is UDP-N-acetyl-alpha-D-muramoyl-L-alanine + D-glutamate + ATP = UDP-N-acetyl-alpha-D-muramoyl-L-alanyl-D-glutamate + ADP + phosphate + H(+). It functions in the pathway cell wall biogenesis; peptidoglycan biosynthesis. Functionally, cell wall formation. Catalyzes the addition of glutamate to the nucleotide precursor UDP-N-acetylmuramoyl-L-alanine (UMA). In Dechloromonas aromatica (strain RCB), this protein is UDP-N-acetylmuramoylalanine--D-glutamate ligase.